Reading from the N-terminus, the 455-residue chain is Anaerobic glycerol-3-phosphate dehydrogenase subunit B (455 aa).

This sequence belongs to the anaerobic G-3-P dehydrogenase subunit B family. In terms of assembly, composed of a catalytic GlpA/B dimer and of membrane bound GlpC. The cofactor is FMN.

It carries out the reaction a quinone + sn-glycerol 3-phosphate = dihydroxyacetone phosphate + a quinol. It functions in the pathway polyol metabolism; glycerol degradation via glycerol kinase pathway; glycerone phosphate from sn-glycerol 3-phosphate (anaerobic route): step 1/1. Its function is as follows. Conversion of glycerol 3-phosphate to dihydroxyacetone. Uses fumarate or nitrate as electron acceptor. This Aliivibrio fischeri (strain ATCC 700601 / ES114) (Vibrio fischeri) protein is Anaerobic glycerol-3-phosphate dehydrogenase subunit B.